The primary structure comprises 66 residues: Sec-independent protein translocase protein TatA (66 aa).

The helical transmembrane segment at 1–21 threads the bilayer; sequence MSIGIWQIAIVVILVVLLFGR. The segment at 43 to 66 is disordered; that stretch reads ATDITDEPEPKNVSENNQDSKDKE. The span at 50–66 shows a compositional bias: basic and acidic residues; sequence PEPKNVSENNQDSKDKE.

Belongs to the TatA/E family. As to quaternary structure, the Tat system comprises two distinct complexes: a TatABC complex, containing multiple copies of TatA, TatB and TatC subunits, and a separate TatA complex, containing only TatA subunits. Substrates initially bind to the TatABC complex, which probably triggers association of the separate TatA complex to form the active translocon.

It localises to the cell inner membrane. Part of the twin-arginine translocation (Tat) system that transports large folded proteins containing a characteristic twin-arginine motif in their signal peptide across membranes. TatA could form the protein-conducting channel of the Tat system. This chain is Sec-independent protein translocase protein TatA, found in Pelagibacter ubique (strain HTCC1062).